A 158-amino-acid polypeptide reads, in one-letter code: Small ribosomal subunit protein uS9 (158 aa).

It belongs to the universal ribosomal protein uS9 family.

This is Small ribosomal subunit protein uS9 from Nitrobacter winogradskyi (strain ATCC 25391 / DSM 10237 / CIP 104748 / NCIMB 11846 / Nb-255).